Reading from the N-terminus, the 299-residue chain is Probable lipid kinase YegS (299 aa).

The DAGKc domain maps to 2-133 (ANFPASLLIL…IDMARVNDKT (132 aa)). ATP is bound by residues Thr-40, 66 to 72 (GDGTINE), and Thr-95. Leu-215, Asp-218, and Leu-220 together coordinate Mg(2+). The active-site Proton acceptor is the Glu-271.

The protein belongs to the diacylglycerol/lipid kinase family. YegS lipid kinase subfamily. Requires Mg(2+) as cofactor. Ca(2+) serves as cofactor.

The protein localises to the cytoplasm. Probably phosphorylates lipids; the in vivo substrate is unknown. The protein is Probable lipid kinase YegS of Salmonella agona (strain SL483).